The following is a 207-amino-acid chain: Thiamine-phosphate synthase (207 aa).

4-amino-2-methyl-5-(diphosphooxymethyl)pyrimidine-binding positions include 35–39 (QYRDK) and Asn-67. Mg(2+) contacts are provided by Asp-68 and Asp-86. A 4-amino-2-methyl-5-(diphosphooxymethyl)pyrimidine-binding site is contributed by Thr-105. 132 to 134 (SVT) lines the 2-[(2R,5Z)-2-carboxy-4-methylthiazol-5(2H)-ylidene]ethyl phosphate pocket. Lys-135 is a binding site for 4-amino-2-methyl-5-(diphosphooxymethyl)pyrimidine. Residue Gly-162 participates in 2-[(2R,5Z)-2-carboxy-4-methylthiazol-5(2H)-ylidene]ethyl phosphate binding.

Belongs to the thiamine-phosphate synthase family. It depends on Mg(2+) as a cofactor.

It carries out the reaction 2-[(2R,5Z)-2-carboxy-4-methylthiazol-5(2H)-ylidene]ethyl phosphate + 4-amino-2-methyl-5-(diphosphooxymethyl)pyrimidine + 2 H(+) = thiamine phosphate + CO2 + diphosphate. The enzyme catalyses 2-(2-carboxy-4-methylthiazol-5-yl)ethyl phosphate + 4-amino-2-methyl-5-(diphosphooxymethyl)pyrimidine + 2 H(+) = thiamine phosphate + CO2 + diphosphate. It catalyses the reaction 4-methyl-5-(2-phosphooxyethyl)-thiazole + 4-amino-2-methyl-5-(diphosphooxymethyl)pyrimidine + H(+) = thiamine phosphate + diphosphate. It participates in cofactor biosynthesis; thiamine diphosphate biosynthesis; thiamine phosphate from 4-amino-2-methyl-5-diphosphomethylpyrimidine and 4-methyl-5-(2-phosphoethyl)-thiazole: step 1/1. Functionally, condenses 4-methyl-5-(beta-hydroxyethyl)thiazole monophosphate (THZ-P) and 2-methyl-4-amino-5-hydroxymethyl pyrimidine pyrophosphate (HMP-PP) to form thiamine monophosphate (TMP). The chain is Thiamine-phosphate synthase from Pseudomonas putida (strain ATCC 47054 / DSM 6125 / CFBP 8728 / NCIMB 11950 / KT2440).